We begin with the raw amino-acid sequence, 243 residues long: Probable 2-phosphosulfolactate phosphatase (243 aa).

Belongs to the ComB family. Mg(2+) serves as cofactor.

It catalyses the reaction (2R)-O-phospho-3-sulfolactate + H2O = (2R)-3-sulfolactate + phosphate. The sequence is that of Probable 2-phosphosulfolactate phosphatase from Prochlorococcus marinus (strain MIT 9303).